Consider the following 61-residue polypeptide: UPF0181 protein KPN78578_22920 (61 aa).

This sequence belongs to the UPF0181 family.

This is UPF0181 protein KPN78578_22920 from Klebsiella pneumoniae subsp. pneumoniae (strain ATCC 700721 / MGH 78578).